Reading from the N-terminus, the 255-residue chain is Probable transcriptional regulatory protein PCC8801_2028 (255 aa).

This sequence belongs to the TACO1 family.

It is found in the cytoplasm. This Rippkaea orientalis (strain PCC 8801 / RF-1) (Cyanothece sp. (strain PCC 8801)) protein is Probable transcriptional regulatory protein PCC8801_2028.